The chain runs to 287 residues: uncharacterized protein (287 aa).

Active-site charge relay system residues include Thr-43 and Tyr-104. Tyr-130 serves as the catalytic Proton donor. The active-site Schiff-base intermediate with substrate is the Lys-158.

This sequence belongs to the DapA family. In terms of assembly, homotetramer.

The protein localises to the cytoplasm. This is an uncharacterized protein from Pyrococcus horikoshii (strain ATCC 700860 / DSM 12428 / JCM 9974 / NBRC 100139 / OT-3).